A 464-amino-acid chain; its full sequence is 3-isopropylmalate dehydratase large subunit (464 aa).

[4Fe-4S] cluster is bound by residues C337, C397, and C400.

This sequence belongs to the aconitase/IPM isomerase family. LeuC type 1 subfamily. Heterodimer of LeuC and LeuD. The cofactor is [4Fe-4S] cluster.

The catalysed reaction is (2R,3S)-3-isopropylmalate = (2S)-2-isopropylmalate. Its pathway is amino-acid biosynthesis; L-leucine biosynthesis; L-leucine from 3-methyl-2-oxobutanoate: step 2/4. Catalyzes the isomerization between 2-isopropylmalate and 3-isopropylmalate, via the formation of 2-isopropylmaleate. This chain is 3-isopropylmalate dehydratase large subunit, found in Bacillus mycoides (strain KBAB4) (Bacillus weihenstephanensis).